The primary structure comprises 509 residues: Probable cytochrome P450 4ac1 (509 aa).

Heme is bound by residues Glu317 and Cys454.

The protein belongs to the cytochrome P450 family. The cofactor is heme.

The protein localises to the endoplasmic reticulum membrane. It localises to the microsome membrane. In terms of biological role, may be involved in the metabolism of insect hormones and in the breakdown of synthetic insecticides. The chain is Probable cytochrome P450 4ac1 (Cyp4ac1) from Drosophila melanogaster (Fruit fly).